Here is a 291-residue protein sequence, read N- to C-terminus: 5-hydroxytryptamine receptor 1D (291 aa).

Residues 30–54 (LCDIWLSSDITCCTASILHLCVIAL) form a helical membrane-spanning segment. A disulfide bond links Cys31 and Cys108. Serotonin-binding residues include Asp38 and Cys42. The DRY motif; important for ligand-induced conformation changes motif lies at 55-57 (DRY). The chain crosses the membrane as a helical span at residues 75-96 (AAAMIAIVWAISICISIPPLFW). A glycan (N-linked (GlcNAc...) asparagine) is linked at Asn111. The next 3 membrane-spanning stretches (helical) occupy residues 115–138 (ISYT…ILYG), 221–246 (KTLG…VLPI), and 256–279 (ALFD…YTVF). A serotonin-binding site is contributed by Ser241. Positions 272–276 (NPIIY) match the NPxxY motif; important for ligand-induced conformation changes and signaling motif.

The protein belongs to the G-protein coupled receptor 1 family. As to quaternary structure, homodimer. Heterodimer with HTR1B.

It localises to the cell membrane. Functionally, G-protein coupled receptor for 5-hydroxytryptamine (serotonin). Also functions as a receptor for ergot alkaloid derivatives, various anxiolytic and antidepressant drugs and other psychoactive substances. Ligand binding causes a conformation change that triggers signaling via guanine nucleotide-binding proteins (G proteins) and modulates the activity of downstream effectors, such as adenylate cyclase. HTR1D is coupled to G(i)/G(o) G alpha proteins and mediates inhibitory neurotransmission by inhibiting adenylate cyclase activity. Regulates the release of 5-hydroxytryptamine in the brain, and thereby affects neural activity. May also play a role in regulating the release of other neurotransmitters. May play a role in vasoconstriction. The protein is 5-hydroxytryptamine receptor 1D (HTR1D) of Sus scrofa (Pig).